The primary structure comprises 67 residues: Small ribosomal subunit protein bS21 (67 aa).

Belongs to the bacterial ribosomal protein bS21 family.

This is Small ribosomal subunit protein bS21 from Acidiphilium cryptum (strain JF-5).